Here is an 813-residue protein sequence, read N- to C-terminus: Polycomb group protein FERTILIZATION-INDEPENDENT SEED 2 (813 aa).

A disordered region spans residues 1 to 27 (MARKSIRGKEVVMVSDDDDDDDDVDDD). Residues 15–26 (SDDDDDDDDVDD) are compositionally biased toward acidic residues. A C2H2-type zinc finger spans residues 134–155 (CPFCLIPCGGHEGLQLHLKSSH). Disordered regions lie at residues 197–216 (SPLTFCSKNRNQRRQRDDSN), 232–261 (DLPRGTENDSTHVNDDNVSSPPRAHSSEKI), and 274–648 (ESSE…RKEL). Over residues 232 to 246 (DLPRGTENDSTHVND) the composition is skewed to basic and acidic residues. The stretch at 243 to 264 (HVNDDNVSSPPRAHSSEKISDI) is one A-1 repeat. Positions 243-542 (HVNDDNVSSP…HSSKKNKSTR (300 aa)) are 12 X approximate repeat A. The B-1 repeat unit spans residues 265 to 281 (LTTTQLAIAESSEPKVP). Residues 265 to 640 (LTTTQLAIAE…KAEPSEPKVT (376 aa)) form a 7 X approximate repeat B region. The stretch at 282-304 (HVNDGNVSSPPRAHSSAEKNEST) is one A-2 repeat. Composition is skewed to basic and acidic residues over residues 296 to 307 (SSAEKNESTHVN), 319 to 331 (HSLEKNESTHVNE), and 344 to 353 (KKNESTHMND). Residues 305-327 (HVNDDDDVSSPPRAHSLEKNEST) form an A-3 repeat. The stretch at 328 to 349 (HVNEDNISSPPKAHSSKKNEST) is one A-4 repeat. Residues 350-371 (HMNDEDVSFPPRTRSSKETSDI) form an A-5 repeat. A B-2 repeat occupies 372-388 (LTTTQPAIVEPSEPKVR). Positions 388 to 402 (RRGSRRKQLYAKRYK) are enriched in basic residues. A B-3 repeat occupies 403 to 419 (ARETQPAIAESSEPKVL). Basic and acidic residues-rich tracts occupy residues 414-423 (SEPKVLHVND) and 453-462 (SEPKVPHVND). Residues 420 to 441 (HVNDENVSSPPEAHSLEKASDI) form an A-6 repeat. Residues 442–458 (LTTTQPAIAESSEPKVP) form a B-4 repeat. Residues 459–481 (HVNDENVSSTPRAHSSKKNKSTR) form an A-7 repeat. Basic residues predominate over residues 472 to 481 (HSSKKNKSTR). The stretch at 482–502 (KNVDNVPSPPKTRSSKKTSDI) is one A-8 repeat. Residues 501–512 (DILTTTQPTIAE) show a composition bias toward polar residues. The B-5 repeat unit spans residues 503–519 (LTTTQPTIAESSEPKVR). A compositionally biased stretch (basic and acidic residues) spans 514-523 (SEPKVRHVND). The A-9 repeat unit spans residues 520–542 (HVNDDNVSSTPRAHSSKKNKSTR). One copy of the A-10 repeat lies at 543 to 563 (KNDDNIPSPPKTRSSKKTSNI). The stretch at 564 to 579 (LTRTQPAIAESEPKVP) is one B-6 repeat. Residues 574-586 (SEPKVPHVNDDKV) show a composition bias toward basic and acidic residues. The A-11 repeat unit spans residues 580–601 (HVNDDKVSSTPRAHSSKKNKST). A compositionally biased stretch (basic residues) spans 593-602 (HSSKKNKSTH). The stretch at 602–623 (HKKDDNASLPPKTRSSKKTSDI) is one A-12 repeat. Residues 624–640 (LATTQPAKAEPSEPKVT) form a B-7 repeat. Residues 648–783 (LHAERCEAKR…CAKTFHKCTT (136 aa)) form a VEFS-box region.

The protein belongs to the VEFS (VRN2-EMF2-FIS2-SU(Z)12) family. In terms of assembly, probably indirectly associated with FIE and/or MEA. In plants, PcG complexes are probably composed of a member of the EZ family (CLF or MEA), FIE, and a member of the VEFS family (FIS2, VRN2 or EMF2). As to expression, weakly expressed. Expressed in late siliques.

It is found in the nucleus. In terms of biological role, polycomb group (PcG) protein. PcG proteins act by forming multiprotein complexes, which are required to maintain the transcriptionally repressive state of homeotic genes throughout development. PcG proteins are not required to initiate repression, but to maintain it during later stages of development. They probably act via the methylation of histones, rendering chromatin heritably changed in its expressibility. Required to prevent the proliferation of the central cell by repressing unknown target genes before fertilization. Regulates the anteroposterior organization of the endosperm. The protein is Polycomb group protein FERTILIZATION-INDEPENDENT SEED 2 of Arabidopsis thaliana (Mouse-ear cress).